A 204-amino-acid polypeptide reads, in one-letter code: MTEQKVVIIDTGCANVSSVKFAIERLGYDVTISKDPQVVLSADKLFLPGVGTASEAMKNLEERDLINLVKQVEKPLLGICLGMQLLGKFSQEKGQKADELVECLGLCDGEVKLLQTGDLPLPHMGWNTVSAKAGNPLFKDIEEGEYFYFVHSFAMPVGDYTIAECDYGNPFTAAVQSGNYYGVQFHPERSSKAGAKLIQNFLEL.

A Glutamine amidotransferase type-1 domain is found at 5–204; it reads KVVIIDTGCA…AKLIQNFLEL (200 aa). Cys80 (nucleophile) is an active-site residue. Catalysis depends on residues His186 and Glu188.

As to quaternary structure, heterodimer of HisH and HisF.

Its subcellular location is the cytoplasm. The enzyme catalyses 5-[(5-phospho-1-deoxy-D-ribulos-1-ylimino)methylamino]-1-(5-phospho-beta-D-ribosyl)imidazole-4-carboxamide + L-glutamine = D-erythro-1-(imidazol-4-yl)glycerol 3-phosphate + 5-amino-1-(5-phospho-beta-D-ribosyl)imidazole-4-carboxamide + L-glutamate + H(+). It catalyses the reaction L-glutamine + H2O = L-glutamate + NH4(+). It functions in the pathway amino-acid biosynthesis; L-histidine biosynthesis; L-histidine from 5-phospho-alpha-D-ribose 1-diphosphate: step 5/9. Its function is as follows. IGPS catalyzes the conversion of PRFAR and glutamine to IGP, AICAR and glutamate. The HisH subunit catalyzes the hydrolysis of glutamine to glutamate and ammonia as part of the synthesis of IGP and AICAR. The resulting ammonia molecule is channeled to the active site of HisF. This is Imidazole glycerol phosphate synthase subunit HisH from Vibrio parahaemolyticus serotype O3:K6 (strain RIMD 2210633).